Here is a 435-residue protein sequence, read N- to C-terminus: 3-phosphoshikimate 1-carboxyvinyltransferase (435 aa).

Residues Lys-22, Ser-23, and Arg-27 each contribute to the 3-phosphoshikimate site. Lys-22 serves as a coordination point for phosphoenolpyruvate. Phosphoenolpyruvate is bound by residues Gly-94 and Arg-122. Ser-166, Gln-168, Asp-314, and Lys-341 together coordinate 3-phosphoshikimate. Gln-168 contacts phosphoenolpyruvate. The active-site Proton acceptor is the Asp-314. Phosphoenolpyruvate-binding residues include Arg-345 and Arg-388.

This sequence belongs to the EPSP synthase family. In terms of assembly, monomer.

Its subcellular location is the cytoplasm. It carries out the reaction 3-phosphoshikimate + phosphoenolpyruvate = 5-O-(1-carboxyvinyl)-3-phosphoshikimate + phosphate. The protein operates within metabolic intermediate biosynthesis; chorismate biosynthesis; chorismate from D-erythrose 4-phosphate and phosphoenolpyruvate: step 6/7. Its function is as follows. Catalyzes the transfer of the enolpyruvyl moiety of phosphoenolpyruvate (PEP) to the 5-hydroxyl of shikimate-3-phosphate (S3P) to produce enolpyruvyl shikimate-3-phosphate and inorganic phosphate. This chain is 3-phosphoshikimate 1-carboxyvinyltransferase, found in Ruthia magnifica subsp. Calyptogena magnifica.